Reading from the N-terminus, the 541-residue chain is Peptidyl-alpha-hydroxyglycine alpha-amidating lyase 1 (541 aa).

An N-terminal signal peptide occupies residues 1-33 (MKSTDSAKCLGSKSLAICCLLLHLLLCIRPAVS). At 34–458 (QTQSPQRYLH…VAVHHPSGKA (425 aa)) the chain is on the extracellular side. Asn92 is a glycosylation site (N-linked (GlcNAc...) asparagine). 3 NHL repeats span residues 164 to 205 (GKVQ…FPPR), 215 to 258 (LGDA…YSRK), and 272 to 314 (GISY…FLSS). 2 cysteine pairs are disulfide-bonded: Cys228-Cys248 and Cys299-Cys310. The N-linked (GlcNAc...) asparagine glycan is linked to Asn315. The NHL 4 repeat unit spans residues 374–418 (KQLVSKFGPNNLQFQNPHDVAVTADGNEIYVAELNPMRIHKFVHR). The chain crosses the membrane as a helical span at residues 459–479 (ILVASLMLLFAGSTFALALIF). The Cytoplasmic portion of the chain corresponds to 480-541 (ARRRKRGCLP…TKTLASAQYA (62 aa)). A disordered region spans residues 521-541 (LDQQASDEEQETKTLASAQYA).

This sequence belongs to the peptidyl-alpha-hydroxyglycine alpha-amidating lyase family. Requires Zn(2+) as cofactor. Post-translationally, N-glycosylated. As to expression, widely expressed. In mature larvae, it is ubiquitously expressed with a low expression in all cells and a stronger expression in a subset of neurons. Colocalizes with neuropeptide proctolin. In adults, weak expression is observed in most neuronal cell bodies and in scattered large cells throughout the protocerebrum and also in the subesophageal neuromeres (at protein level).

The protein resides in the cell membrane. The catalysed reaction is a [peptide]-C-terminal (2S)-2-hydroxyglycine = a [peptide]-C-terminal amide + glyoxylate. Peptidyl-alpha-hydroxylglycine alpha-amidating lyase that catalyzes an essential reaction in C-terminal alpha-amidation of peptides. Mediates the dismutation of the unstable peptidyl(2-hydroxyglycine) intermediate to glyoxylate and the corresponding desglycine peptide amide. C-terminal amidation of peptides such as neuropeptides is essential for full biological activity. The chain is Peptidyl-alpha-hydroxyglycine alpha-amidating lyase 1 (Pal1) from Drosophila melanogaster (Fruit fly).